A 301-amino-acid chain; its full sequence is Acetylglutamate kinase (301 aa).

Substrate is bound by residues 72-73 (GG), arginine 94, and asparagine 199.

It belongs to the acetylglutamate kinase family. ArgB subfamily.

It localises to the cytoplasm. The enzyme catalyses N-acetyl-L-glutamate + ATP = N-acetyl-L-glutamyl 5-phosphate + ADP. It functions in the pathway amino-acid biosynthesis; L-arginine biosynthesis; N(2)-acetyl-L-ornithine from L-glutamate: step 2/4. Its function is as follows. Catalyzes the ATP-dependent phosphorylation of N-acetyl-L-glutamate. This Azorhizobium caulinodans (strain ATCC 43989 / DSM 5975 / JCM 20966 / LMG 6465 / NBRC 14845 / NCIMB 13405 / ORS 571) protein is Acetylglutamate kinase.